The chain runs to 308 residues: Olfactory receptor OR9H1 (308 aa).

Topologically, residues 1–26 (MVNFTHVSEFVLLGFQGGPGMQAMLF) are extracellular. A helical membrane pass occupies residues 27–47 (LIFLILYGIAVVGNLGMIVII). The Cytoplasmic portion of the chain corresponds to 48-58 (WVDAHLHTPMY). A helical transmembrane segment spans residues 59–81 (AFLQSLSLLDICYSSTIAPRALA). Residues 82–95 (NSMQEDHTISFGGC) are Extracellular-facing. Cysteine 95 and cysteine 177 are oxidised to a cystine. A helical transmembrane segment spans residues 96–116 (AAQFFFLSLFGITEAFLLAAM). Residues 117–137 (AYDRFIAICNPLLYSVSMSHQ) lie on the Cytoplasmic side of the membrane. Residues 138–158 (VCVLLISGSYLWGVVNAIAQT) traverse the membrane as a helical segment. Over 159 to 203 (TMTFRLPFCGSNEINDFFCDVPPLLSLSCSDTFINQLVLLGLCGS) the chain is Extracellular. Residues 204-224 (IIVSTFLIVLVSYIYIISTIL) traverse the membrane as a helical segment. At 225–245 (RIPTMQGCQKAFSTCASHLTG) the chain is on the cytoplasmic side. A helical transmembrane segment spans residues 246–266 (VCLFFGTVFFMYAQPSAIFFM). Residues 267–269 (EQS) lie on the Extracellular side of the membrane. The helical transmembrane segment at 270–290 (KIVSIFYTMVIPMLNPLIYSL) threads the bilayer. Over 291 to 308 (RNKEVKQALRRSMQKLSL) the chain is Cytoplasmic.

Belongs to the G-protein coupled receptor 1 family.

Its subcellular location is the cell membrane. Odorant receptor. This is Olfactory receptor OR9H1 from Homo sapiens (Human).